A 334-amino-acid polypeptide reads, in one-letter code: tRNA N6-adenosine threonylcarbamoyltransferase (334 aa).

His-112 and His-116 together coordinate Fe cation. Substrate-binding positions include Val-135–Gly-139, Asp-168, Gly-181, Asp-185, and Asn-274. A Fe cation-binding site is contributed by Asp-303.

Belongs to the KAE1 / TsaD family. Requires Fe(2+) as cofactor.

It localises to the cytoplasm. The catalysed reaction is L-threonylcarbamoyladenylate + adenosine(37) in tRNA = N(6)-L-threonylcarbamoyladenosine(37) in tRNA + AMP + H(+). Its function is as follows. Required for the formation of a threonylcarbamoyl group on adenosine at position 37 (t(6)A37) in tRNAs that read codons beginning with adenine. Is involved in the transfer of the threonylcarbamoyl moiety of threonylcarbamoyl-AMP (TC-AMP) to the N6 group of A37, together with TsaE and TsaB. TsaD likely plays a direct catalytic role in this reaction. The sequence is that of tRNA N6-adenosine threonylcarbamoyltransferase from Anaeromyxobacter dehalogenans (strain 2CP-C).